Consider the following 954-residue polypeptide: Bifunctional glutamine synthetase adenylyltransferase/adenylyl-removing enzyme (954 aa).

Residues 1–450 (MENISNKPLS…HFIETVGGRT (450 aa)) form an adenylyl removase region. Residues 454-954 (GADLWTQQLW…MDIYQRILVD (501 aa)) are adenylyl transferase.

This sequence belongs to the GlnE family. The cofactor is Mg(2+).

It carries out the reaction [glutamine synthetase]-O(4)-(5'-adenylyl)-L-tyrosine + phosphate = [glutamine synthetase]-L-tyrosine + ADP. It catalyses the reaction [glutamine synthetase]-L-tyrosine + ATP = [glutamine synthetase]-O(4)-(5'-adenylyl)-L-tyrosine + diphosphate. Involved in the regulation of glutamine synthetase GlnA, a key enzyme in the process to assimilate ammonia. When cellular nitrogen levels are high, the C-terminal adenylyl transferase (AT) inactivates GlnA by covalent transfer of an adenylyl group from ATP to specific tyrosine residue of GlnA, thus reducing its activity. Conversely, when nitrogen levels are low, the N-terminal adenylyl removase (AR) activates GlnA by removing the adenylyl group by phosphorolysis, increasing its activity. The regulatory region of GlnE binds the signal transduction protein PII (GlnB) which indicates the nitrogen status of the cell. This is Bifunctional glutamine synthetase adenylyltransferase/adenylyl-removing enzyme from Shewanella woodyi (strain ATCC 51908 / MS32).